Consider the following 132-residue polypeptide: Fatty acid-binding protein 1 (132 aa).

The residue at position 2 (A2) is an N-acetylalanine.

It belongs to the calycin superfamily. Fatty-acid binding protein (FABP) family.

This chain is Fatty acid-binding protein 1 (FABP-1), found in Fasciola gigantica (Giant liver fluke).